The chain runs to 143 residues: Hemoglobin subunit alpha-2 (143 aa).

The residue at position 2 (Ser-2) is an N-acetylserine. The 142-residue stretch at 2-143 (SLSAKDKATV…LALALSEKYR (142 aa)) folds into the Globin domain. His-60 contacts O2. His-89 is a heme b binding site.

This sequence belongs to the globin family. As to quaternary structure, hb 2 is a heterotetramer of two alpha-2 and two beta-1 chains. Hb 3 is a heterotetramer of two alpha-2 and two beta-2 chains. In terms of tissue distribution, red blood cells.

Its function is as follows. Involved in oxygen transport from gills to the various peripheral tissues. This is Hemoglobin subunit alpha-2 (hba2) from Boreogadus saida (Polar cod).